A 307-amino-acid polypeptide reads, in one-letter code: Porphobilinogen deaminase (307 aa).

Cys-241 carries the S-(dipyrrolylmethanemethyl)cysteine modification.

Belongs to the HMBS family. In terms of assembly, monomer. Dipyrromethane is required as a cofactor.

It catalyses the reaction 4 porphobilinogen + H2O = hydroxymethylbilane + 4 NH4(+). Its pathway is porphyrin-containing compound metabolism; protoporphyrin-IX biosynthesis; coproporphyrinogen-III from 5-aminolevulinate: step 2/4. Tetrapolymerization of the monopyrrole PBG into the hydroxymethylbilane pre-uroporphyrinogen in several discrete steps. This Coxiella burnetii (strain CbuG_Q212) (Coxiella burnetii (strain Q212)) protein is Porphobilinogen deaminase.